Reading from the N-terminus, the 424-residue chain is DNA repair protein Rad60 (424 aa).

A Phosphotyrosine modification is found at Tyr-26. Ser-32 and Ser-34 each carry phosphoserine. The interval 45-177 (LPKKSTKTGK…LTTTTSNSAS (133 aa)) is disordered. The segment covering 48-57 (KSTKTGKRKN) has biased composition (basic residues). A compositionally biased stretch (basic and acidic residues) spans 77-93 (QAEHKAVEPEEDMRTER). Position 96 is a phosphoserine (Ser-96). Over residues 104 to 123 (EMEKKNGQQSDVEKHAKEND) the composition is skewed to basic and acidic residues. Positions 156-166 (KPKKRGQKKRT) are enriched in basic residues. The span at 167–177 (SLTTTTSNSAS) shows a compositional bias: low complexity.

Forms a complex with dgrn; likely required for localization to the nuclear periphery. Interacts with the SMC5-SMC6 complex members SMC5 and SMC6/jnj following ionizing radiation (IR) to induce DNA damage. Interaction between the SMC5-SMC6 complex and the dgrn-Rad60 complex, may stabilize the association of heterochromatic DSBs with the nuclear periphery.

It is found in the nucleus. It localises to the nucleoplasm. Functionally, required for repair of DNA double strand breaks which occur during replication or are induced by ionizing radiation (IR). Functions with dgrn and downstream of the SMC5-SMC6 complex to regulate strand break repair. Likely functions by stabilizing the association of heterochromatic double strand breaks (DSBs) with the nuclear periphery as part of the homologous recombination (HR) repair process. The chain is DNA repair protein Rad60 from Drosophila melanogaster (Fruit fly).